The sequence spans 153 residues: UPF0756 membrane protein lwe1581 (153 aa).

4 helical membrane passes run 6-26, 54-74, 80-100, and 117-137; these read MLFLLLFLLLGLIAKNNSLII, WGVTIITVAILIPIATGQIGF, SFKSAAGWIGLGAGIAVSILA, and LVFGTILAVVLFRGIAAGPVI.

This sequence belongs to the UPF0756 family.

The protein localises to the cell membrane. This Listeria welshimeri serovar 6b (strain ATCC 35897 / DSM 20650 / CCUG 15529 / CIP 8149 / NCTC 11857 / SLCC 5334 / V8) protein is UPF0756 membrane protein lwe1581.